A 42-amino-acid chain; its full sequence is Delta-hexatoxin-Iw1a (42 aa).

Cystine bridges form between Cys-1–Cys-15, Cys-8–Cys-20, Cys-14–Cys-31, and Cys-16–Cys-42.

Belongs to the neurotoxin 06 (delta-actx) family. Expressed by the venom gland.

It localises to the secreted. Inhibits tetrodotoxin-sensitive sodium channels by binding to site 3. It slows the inactivation, causes a prolongation of action potential duration resulting in repetitive firing in autonomic and motor nerve fibers. Does not depolarize the resting potential. Does not affect tetrodotoxin-resistant sodium channels. This lethal neurotoxin is active on both insect and mammalian voltage-gated sodium channels (Nav). In Illawarra wisharti (Illawarra funnel-web spider), this protein is Delta-hexatoxin-Iw1a.